The sequence spans 649 residues: DNA mismatch repair protein MutL (649 aa).

It belongs to the DNA mismatch repair MutL/HexB family.

In terms of biological role, this protein is involved in the repair of mismatches in DNA. It is required for dam-dependent methyl-directed DNA mismatch repair. May act as a 'molecular matchmaker', a protein that promotes the formation of a stable complex between two or more DNA-binding proteins in an ATP-dependent manner without itself being part of a final effector complex. In Streptococcus pneumoniae serotype 2 (strain D39 / NCTC 7466), this protein is DNA mismatch repair protein MutL.